Reading from the N-terminus, the 313-residue chain is Type II restriction enzyme BsuMI component YdiR (313 aa).

A disordered region spans residues 289 to 313 (FVSGDIVDENATTSSDDLPEDFENN).

BsuMI restriction activity requires YdiR, YdiS and YdjA.

The enzyme catalyses Endonucleolytic cleavage of DNA to give specific double-stranded fragments with terminal 5'-phosphates.. Functionally, a P subtype restriction enzyme that recognizes the double-stranded sequence 5'-CTCGAG-3'; the cleavage site is unknown. The chain is Type II restriction enzyme BsuMI component YdiR (ydiR) from Bacillus subtilis (strain 168).